The sequence spans 142 residues: Large ribosomal subunit protein uL11 (142 aa).

This sequence belongs to the universal ribosomal protein uL11 family. Part of the ribosomal stalk of the 50S ribosomal subunit. Interacts with L10 and the large rRNA to form the base of the stalk. L10 forms an elongated spine to which L12 dimers bind in a sequential fashion forming a multimeric L10(L12)X complex. Post-translationally, one or more lysine residues are methylated.

Functionally, forms part of the ribosomal stalk which helps the ribosome interact with GTP-bound translation factors. The polypeptide is Large ribosomal subunit protein uL11 (Bradyrhizobium sp. (strain ORS 278)).